Reading from the N-terminus, the 65-residue chain is Putative primary metabolism protein prl65 (65 aa).

Residues 1-25 (MTKYSKGNKVEYHPIGGPSGTSTST) form a disordered region.

May play a role in primary metabolism. The polypeptide is Putative primary metabolism protein prl65 (Schizosaccharomyces pombe (strain 972 / ATCC 24843) (Fission yeast)).